The sequence spans 244 residues: Acetylglutamate kinase (244 aa).

Residues 40 to 41 (GG), arginine 62, and asparagine 155 each bind substrate.

Belongs to the acetylglutamate kinase family. ArgB subfamily.

It is found in the cytoplasm. The catalysed reaction is N-acetyl-L-glutamate + ATP = N-acetyl-L-glutamyl 5-phosphate + ADP. The protein operates within amino-acid biosynthesis; L-arginine biosynthesis; N(2)-acetyl-L-ornithine from L-glutamate: step 2/4. Functionally, catalyzes the ATP-dependent phosphorylation of N-acetyl-L-glutamate. This Leuconostoc mesenteroides subsp. mesenteroides (strain ATCC 8293 / DSM 20343 / BCRC 11652 / CCM 1803 / JCM 6124 / NCDO 523 / NBRC 100496 / NCIMB 8023 / NCTC 12954 / NRRL B-1118 / 37Y) protein is Acetylglutamate kinase.